The chain runs to 245 residues: Thiopurine S-methyltransferase (245 aa).

29 to 40 (WQEKWVSRRIGF) is a binding site for S-adenosyl-L-methionine. Phe40 contributes to the substrate binding site. An N6-acetyllysine modification is found at Lys58. Residues Leu69, Glu90, and Arg152 each contribute to the S-adenosyl-L-methionine site.

Belongs to the class I-like SAM-binding methyltransferase superfamily. TPMT family. Monomer.

Its subcellular location is the cytoplasm. The enzyme catalyses S-adenosyl-L-methionine + a thiopurine = S-adenosyl-L-homocysteine + a thiopurine S-methylether.. This chain is Thiopurine S-methyltransferase (TPMT), found in Lycaon pictus (African wild dog).